Reading from the N-terminus, the 160-residue chain is uncharacterized protein (160 aa).

Residues Asn-69–Arg-145 are a coiled coil. Disordered stretches follow at residues Gly-82–Ala-109 and Lys-129–Lys-160. The span at Gln-86–Gln-99 shows a compositional bias: basic residues. Over residues Ile-133–Tyr-146 the composition is skewed to basic and acidic residues. The segment covering Met-147–Lys-160 has biased composition (basic residues).

This is an uncharacterized protein from Bacillus subtilis (strain 168).